A 169-amino-acid chain; its full sequence is Cell division inhibitor SulA (169 aa).

Residues 106 to 112 (ALRTGNY) form a ftsZ binding region. The tract at residues 162-169 (KIHSNLYH) is lon protease binding.

The protein belongs to the SulA family. As to quaternary structure, interacts with FtsZ. Post-translationally, is rapidly cleaved and degraded by the Lon protease once DNA damage is repaired.

Component of the SOS system and an inhibitor of cell division. Accumulation of SulA causes rapid cessation of cell division and the appearance of long, non-septate filaments. In the presence of GTP, binds a polymerization-competent form of FtsZ in a 1:1 ratio, thus inhibiting FtsZ polymerization and therefore preventing it from participating in the assembly of the Z ring. This mechanism prevents the premature segregation of damaged DNA to daughter cells during cell division. This is Cell division inhibitor SulA from Salmonella dublin (strain CT_02021853).